The primary structure comprises 682 residues: MIDQYKHQQLQIGLVSPQQIKAWANKNLPNGEVVGEVTRPSTFHYKTDKPEKDGLFCERIFGPIKSGICACGNSRPSGAENEDERFCQKCGVEFVDSRIRRYQMGYIKLACPVTHVWYLKGLPSYIANLLDKPLKKLEGLVYGDFSFARPSTKKPTFLRLRGLFEEEISSCNHSISPFFSTPGFATFRNREIATGAGAIREQLADLDLRIIIENSLVEWKELEDEGYSGDEWEDRKRRIRKVFLIRRMQLAKHFIQTNVEPEWMVLCLLPVLPPELRPIVYRSGDKVVTSDINELYKRVIRRNNNLAYLLKRSELAPADLVMCQEKLVQEAVDTLLDSGSRGQPIRDGHNKVYKSLSDVIEGKEGRFRETLLGKRVDYSGRSVIVVGPSLSLHQCGLPLEIAIKLFQLFVIRDLITKRATSNVRIAKRKIWEKEPIVWEILQEVMRGHPVLLNRAPTLHRLGIQAFQPTLVEGRTISLHPLVCKGFNADFDGDQMAVHLPLSLEAQAEARLLMFSHMNLLSPAIGDPICVPTQDMLIGLYVLTIGNHRGIYANRYNSCENYPNQKVNYNNNNSKYTKDKEPHFSSSYDAMGAYRQKLISLDSPLWLRWKLDQRVIGSREVPIEVQYESLGTYHEIYAHYLIVGNRKKEIRSIYIRTTLGHISFYREIEEAIQGFSQAYSYTI.

Zn(2+) contacts are provided by C69, C71, C87, and C90. Residues D489, D491, and D493 each coordinate Mg(2+).

Belongs to the RNA polymerase beta' chain family. RpoC1 subfamily. In terms of assembly, in plastids the minimal PEP RNA polymerase catalytic core is composed of four subunits: alpha, beta, beta', and beta''. When a (nuclear-encoded) sigma factor is associated with the core the holoenzyme is formed, which can initiate transcription. Mg(2+) is required as a cofactor. Zn(2+) serves as cofactor.

It localises to the plastid. Its subcellular location is the chloroplast. It carries out the reaction RNA(n) + a ribonucleoside 5'-triphosphate = RNA(n+1) + diphosphate. In terms of biological role, DNA-dependent RNA polymerase catalyzes the transcription of DNA into RNA using the four ribonucleoside triphosphates as substrates. The protein is DNA-directed RNA polymerase subunit beta' of Agrostis stolonifera (Creeping bentgrass).